The sequence spans 447 residues: 2-oxoadipate dioxygenase/decarboxylase (447 aa).

3 residues coordinate 2-oxoadipate: His-68, Arg-72, and His-224. Position 68 (His-68) interacts with Fe(2+). The Fe(2+) site is built by His-224 and Glu-290. Val-391 is a binding site for 2-oxoadipate.

Belongs to the 2-oxoadipate dioxygenase/decarboxylase family. Requires Fe(2+) as cofactor.

It carries out the reaction 2-oxoadipate + O2 = (R)-2-hydroxyglutarate + CO2. Catalyzes the decarboxylation and hydroxylation of 2-oxoadipate (2OA) to form D-2-hydroxyglutarate (D-2-HGA). This is 2-oxoadipate dioxygenase/decarboxylase (ydcJ) from Escherichia coli (strain K12).